A 130-amino-acid chain; its full sequence is Small ribosomal subunit protein uS9 (130 aa).

Residues 104 to 130 (LTRDPRMKERKKYGLKKARRAPQFSKR) form a disordered region. Over residues 111-130 (KERKKYGLKKARRAPQFSKR) the composition is skewed to basic residues.

It belongs to the universal ribosomal protein uS9 family.

The polypeptide is Small ribosomal subunit protein uS9 (Ruminiclostridium cellulolyticum (strain ATCC 35319 / DSM 5812 / JCM 6584 / H10) (Clostridium cellulolyticum)).